We begin with the raw amino-acid sequence, 63 residues long: DNA-directed RNA polymerase 7 kDa subunit (63 aa).

Belongs to the poxviridae DNA-directed RNA polymerase 7 kDa subunit family. In terms of assembly, the DNA-dependent RNA polymerase (vRNAP) consists of eight subunits encoded by early viral genes and termed according to their apparent molecular masses Rpo147, Rpo132, Rpo35, Rpo30, Rpo22, Rpo19, Rpo18, and Rpo7. The same holoenzyme, with the addition of the transcription-specificity factor RAP94, is used for early gene expression.

Its subcellular location is the virion. It carries out the reaction RNA(n) + a ribonucleoside 5'-triphosphate = RNA(n+1) + diphosphate. Part of the DNA-dependent RNA polymerase which catalyzes the transcription of viral DNA into RNA using the four ribonucleoside triphosphates as substrates. Responsible for the transcription of early, intermediate and late genes. DNA-dependent RNA polymerase associates with the early transcription factor (ETF), itself composed of OPG118 and OPG134, thereby allowing the early genes transcription. Late transcription, and probably also intermediate transcription, require newly synthesized RNA polymerase. The sequence is that of DNA-directed RNA polymerase 7 kDa subunit (OPG090) from Homo sapiens (Human).